A 154-amino-acid chain; its full sequence is 8-oxo-dGTP diphosphatase (154 aa).

The Nudix hydrolase domain occupies 1–129; that stretch reads MPQLATICYI…DHTFVEWLLE (129 aa). Residues glycine 38, glutamate 53, glutamate 56, and glutamate 57 each contribute to the Mg(2+) site. Residues 38–59 carry the Nudix box motif; sequence GKLERGETPQECAAREILEETG.

It belongs to the Nudix hydrolase family. Homotrimer. Mg(2+) serves as cofactor.

The catalysed reaction is 8-oxo-dGTP + H2O = 8-oxo-dGMP + diphosphate + H(+). In terms of biological role, involved in the DNA repair system to avoid A.T to G.C transversions. Degrades 8-oxo-dGTP to the monophosphate, but is also active on all of the nucleoside triphosphates. The sequence is that of 8-oxo-dGTP diphosphatase (mutX) from Streptococcus pneumoniae serotype 4 (strain ATCC BAA-334 / TIGR4).